The sequence spans 215 residues: Interleukin-12 subunit alpha (215 aa).

The signal sequence occupies residues 1-22 (MCQSRYLLFLATLVLLNHLTSA). Disulfide bonds link C33-C106, C60-C192, and C81-C119. 3 N-linked (GlcNAc...) asparagine glycosylation sites follow: N35, N89, and N167.

Belongs to the IL-6 superfamily. As to quaternary structure, heterodimer with IL12B; disulfide-linked. This heterodimer is known as interleukin IL-12. Heterodimer with EBI3/IL27B; not disulfide-linked. This heterodimer is known as interleukin IL-35. Interacts with NBR1; this interaction promotes IL-12 secretion.

It localises to the secreted. In terms of biological role, heterodimerizes with IL12B to form the IL-12 cytokine or with EBI3/IL27B to form the IL-35 cytokine. IL-12 is primarily produced by professional antigen-presenting cells (APCs) such as B-cells and dendritic cells (DCs) as well as macrophages and granulocytes and regulates T-cell and natural killer-cell responses, induces the production of interferon-gamma (IFN-gamma), favors the differentiation of T-helper 1 (Th1) cells and is an important link between innate resistance and adaptive immunity. Mechanistically, exerts its biological effects through a receptor composed of IL12R1 and IL12R2 subunits. Binding to the receptor results in the rapid tyrosine phosphorylation of a number of cellular substrates including the JAK family kinases TYK2 and JAK2. In turn, recruited STAT4 gets phosphorylated and translocates to the nucleus where it regulates cytokine/growth factor responsive genes. As part of IL-35, plays essential roles in maintaining the immune homeostasis of the liver microenvironment and also functions as an immune-suppressive cytokine. Mediates biological events through unconventional receptors composed of IL12RB2 and gp130/IL6ST heterodimers or homodimers. Signaling requires the transcription factors STAT1 and STAT4, which form a unique heterodimer that binds to distinct DNA sites. In Rattus norvegicus (Rat), this protein is Interleukin-12 subunit alpha (Il12a).